Consider the following 130-residue polypeptide: MAKLSHEELLSAFEEMTLLELSEFVKLFEEKFDVTAAAPAAVVAAAPAGGGGGEAAVEEEKDEFDVILESAGDKKIQVIKEVRGLTNLGLKDAKDLVDSAPKPVLEGVNKETAEKAKAALEGAGATVTLK.

Belongs to the bacterial ribosomal protein bL12 family. Homodimer. Part of the ribosomal stalk of the 50S ribosomal subunit. Forms a multimeric L10(L12)X complex, where L10 forms an elongated spine to which 2 to 4 L12 dimers bind in a sequential fashion. Binds GTP-bound translation factors.

Forms part of the ribosomal stalk which helps the ribosome interact with GTP-bound translation factors. Is thus essential for accurate translation. The protein is Large ribosomal subunit protein bL12 of Thermobifida fusca (strain YX).